The sequence spans 163 residues: Epithelial membrane protein 3 (163 aa).

The chain crosses the membrane as a helical span at residues 4 to 24 (LLLVVSALHILILVLLFVATL). 2 N-linked (GlcNAc...) asparagine glycosylation sites follow: asparagine 46 and asparagine 56. 3 consecutive transmembrane segments (helical) span residues 66-86 (VQAL…LFMI), 100-120 (TGLC…IYAI), and 139-159 (FALA…YIHL).

Belongs to the PMP-22/EMP/MP20 family.

It localises to the membrane. In terms of biological role, probably involved in cell proliferation and cell-cell interactions. This is Epithelial membrane protein 3 (Emp3) from Rattus norvegicus (Rat).